An 83-amino-acid polypeptide reads, in one-letter code: MALLDFFLSRNKNTANVAKERLQIIVAEQRKYNNEPDYFPQLKREILSVICKYVNIEPNMVTVQLDQKKEDISILELNIILPD.

It belongs to the MinE family.

Functionally, prevents the cell division inhibition by proteins MinC and MinD at internal division sites while permitting inhibition at polar sites. This ensures cell division at the proper site by restricting the formation of a division septum at the midpoint of the long axis of the cell. In Buchnera aphidicola subsp. Acyrthosiphon pisum (strain 5A), this protein is Cell division topological specificity factor.